The following is an 89-amino-acid chain: Cell division topological specificity factor (89 aa).

The protein belongs to the MinE family.

Prevents the cell division inhibition by proteins MinC and MinD at internal division sites while permitting inhibition at polar sites. This ensures cell division at the proper site by restricting the formation of a division septum at the midpoint of the long axis of the cell. This chain is Cell division topological specificity factor, found in Paracoccus denitrificans (strain Pd 1222).